Here is a 400-residue protein sequence, read N- to C-terminus: MSDSINFVSFNQDYSCVSVGTPQGYKIYNCDPFGKCFSKADGGMGIVEMLFCTSLIAVVGMGDQPQNSPRRLKIVNTKRQSTICELTFPTAVLGVRLNRQRLVVLLQDQIYIYDISNMKLVHTIETSPNPGAVCALSASSSDNNNYLVYPFPAPSSTAFNPGENNINDSSPNRKGDVTIFDCNSLQPVNVVEAHKTPLACLSLNSDGTLLATASDKGTIIRVFSVPKAQKLYEFRRGTYPAQIFSINFNLASNLMAVSSATETVHIFQLEAGVSSTPEVPQDTELAIPTRTPQQKGMASVFRKSSRSLGKGLAGAVGSYLPQTFTGMWEPLRDFAFIKQTSLPGTRSVVSVTSTNPPQVLVVTLEGYFYQYTLDLEKGGECDLIRQYSLLDNVEGSLYGP.

2 WD repeats span residues 193–233 and 238–277; these read AHKT…KLYE and TYPAQIFSINFNLASNLMAVSSATETVHIFQLEAGVSSTP. The L/FRRG motif signature appears at 234–238; it reads FRRGT.

The protein belongs to the WD repeat PROPPIN family. In terms of assembly, component of the PI(3,5)P2 regulatory complex.

Its subcellular location is the preautophagosomal structure membrane. It is found in the vacuole membrane. The protein resides in the endosome membrane. Functionally, the PI(3,5)P2 regulatory complex regulates both the synthesis and turnover of phosphatidylinositol 3,5-bisphosphate (PtdIns(3,5)P2). Necessary for proper vacuole morphology. Plays an important role in osmotically-induced vacuole fragmentation. Required for cytoplasm to vacuole transport (Cvt) vesicle formation, pexophagy and starvation-induced autophagy. Involved in correct ATG9 trafficking to the pre-autophagosomal structure. Might also be involved in premeiotic DNA replication. The protein is Autophagy-related protein 18 (ATG18) of Yarrowia lipolytica (strain CLIB 122 / E 150) (Yeast).